Consider the following 72-residue polypeptide: uncharacterized protein (72 aa).

The protein resides in the cytoplasm. It localises to the nucleus. This is an uncharacterized protein from Saccharomyces cerevisiae (strain ATCC 204508 / S288c) (Baker's yeast).